We begin with the raw amino-acid sequence, 688 residues long: Collagen alpha-2(IX) chain (688 aa).

The N-terminal stretch at 1-22 is a signal peptide; the sequence is MAPAADPRSLLVLLQVLGLALA. The segment at 26 to 162 is triple-helical region 4 (COL4); it reads GLPGEPGPPG…PGKPGRPGTI (137 aa). Disordered stretches follow at residues 26–520, 549–578, and 590–662; these read GLPG…RDAS, GATG…PGPR, and IGNT…LPGF. 2 stretches are compositionally biased toward pro residues: residues 30-42 and 105-126; these read EPGP…PPGV and LPGP…PGPV. The segment covering 128 to 138 has biased composition (low complexity); it reads LPGEIGLTGPK. Positions 143 to 156 are enriched in pro residues; it reads PEGPSGPPGPPGKP. Proline 159 bears the 4-hydroxyproline mark. Residues 163 to 179 form a nonhelical region 4 (NC4) region; the sequence is QGLEGSADFLCPTNCPA. An O-linked (Xyl...) (glycosaminoglycan) serine glycan is attached at serine 168. Residues 180-518 are triple-helical region 3 (COL3); sequence GVKGPPGLQG…PGRQGVAGRD (339 aa). 5-hydroxylysine is present on lysine 182. O-linked (Gal...) hydroxylysine glycosylation is present at lysine 182. Composition is skewed to low complexity over residues 251–265 and 394–412; these read KGMV…SPGE and PVGQ…EQGP. Positions 435-444 are enriched in gly residues; the sequence is GPRGGVGDPG. Residues 497–506 show a composition bias toward low complexity; that stretch reads RGLVGDRGLP. The segment at 519 to 548 is nonhelical region 3 (NC3); it reads ASDQHIEDVVLKMLQEQLAEMAVSAKREAL. The interval 549 to 631 is triple-helical region 2 (COL2); sequence GATGMMGPPG…PGLPGRPGQA (83 aa). A compositionally biased stretch (pro residues) spans 556–565; sequence PPGPPGPPGY. A compositionally biased stretch (basic and acidic residues) spans 598–610; it reads KRGEKGDQGEVGR. Residues 632–633 are nonhelical region 2 (NC2); the sequence is IN. The segment at 634-663 is triple-helical region 1 (COL1); it reads GKDGDRGAPGAPGEAGRPGLPGPIGLPGFC. Low complexity predominate over residues 641–651; that stretch reads APGAPGEAGRP. The interval 664-688 is nonhelical region 1 (NC1); the sequence is EPAACLGASAYASGRLTEPGSIKGP.

Belongs to the fibril-associated collagens with interrupted helices (FACIT) family. As to quaternary structure, heterotrimer of an alpha 1(IX), an alpha 2(IX) and an alpha 3(IX) chain. The chains are linked to each other by interchain disulfide bonds. Trimers are also cross-linked via hydroxylysines. Post-translationally, prolines at the third position of the tripeptide repeating unit (G-X-Y) are hydroxylated in some or all of the chains. Covalently linked to the telopeptides of type II collagen by hydroxylysine-derived cross-links.

Its subcellular location is the secreted. The protein localises to the extracellular space. It is found in the extracellular matrix. In terms of biological role, structural component of hyaline cartilage and vitreous of the eye. The chain is Collagen alpha-2(IX) chain from Bos taurus (Bovine).